The primary structure comprises 440 residues: Nuclear fusion protein BIK1 (440 aa).

The CAP-Gly domain maps to 26-69; sequence GPVDTKAGMFAGVDLLANIGKNDGSFMGKKYFQTEYPQSGLFIQ. Phosphoserine is present on residues S95 and S110. The interval 108 to 157 is disordered; sequence QFSPMDDPKSPTPMRSFRITSRHSGNQQSMDQEASDHHQQQEFGYDNRED. Polar residues predominate over residues 125–139; that stretch reads RITSRHSGNQQSMDQ. A compositionally biased stretch (basic and acidic residues) spans 141-157; that stretch reads ASDHHQQQEFGYDNRED. Positions 190 to 397 form a coiled coil; that stretch reads NSSEVTIELR…AQAQTAVESL (208 aa). A CCHC-box motif is present at residues 416-429; that stretch reads CEHCDTMGHNTAEC.

It is found in the cytoplasm. It localises to the cytoskeleton. The protein localises to the microtubule organizing center. Its subcellular location is the spindle pole body. The protein resides in the spindle. Required for nuclear fusion, chromosome disjunction, and nuclear segregation during mitosis. Probably required for the formation or stabilization of microtubules during mitosis and for spindle pole body fusion during conjugation. This Saccharomyces cerevisiae (strain ATCC 204508 / S288c) (Baker's yeast) protein is Nuclear fusion protein BIK1 (BIK1).